The following is a 4690-amino-acid chain: MDQVAVTRFPALHCFEGPKQRQSVGSNARHHTIRGNIDTQHQSQDETLRRFANFVSSLVGDDEISFDFIISPSNGGSDIAESGTAQAKKDPTQATSDYNGITLLRSTPFVESGHSEFGIIIRRQLRNNDSSLFTLEKSFVVTVDKSSYSVRICRDLVPRPFLQSISTSLCSYMGWTNPSQHSEEESNQELQLQTLNFQGQSVLNHPPLMTPPDFESQLCLPKRPQEYAKPLLHNAFLARVRENPGRIALDALSSTGRATYTYKNLDDLSSDLAEKILQIIGVDADHTDRNITVALSTSAELYIAWLGILKAGCVVCPVPTDCPSELLQHMTGLTSSKVVLGSAETLEYFDRIIGDSSIFTFINVETIARQNCEHLLQRPPPLVNTSENDVAYILFTSGSTGKPKGVQITHHAAVCSIAANIAASPHSFESGPSSIRWFQMAAPTFDLSVLEIFVTFSIGGTICACDRTMMLTDAESVITQLEATITMTTPTLASLLRPSRIPKLREVWVCGEMLKREASELFARDRDPSVADGDTNLLNAYGPTEATITCTVDARVSLKHRGSLIGPPLPTCSNIILDSSEPPKAVPLGFAGELAIGGPQLSIGYLKSPEKTAAAFVDVESYGKLYRTGDMARLIMGPDGTLQVEFLGRLSSDQIKILGRRVELGEIEAGLRNPLIAEVAAVALKPEVSGLPQVQLIAVVTCRTEKSDSDVLAACQERAENVLQPHMRPSIYYVMDKLPRLASEKTDRKTLAKYCLSPEKSGLRRLRNGDVDGHREAGSSSIPMLQSVIEAVSSVAIVGSDKITSATTLLSLGIDSLRSVRLLQNFREIGIEGLQVTDILTCHNLGDLDTKAQQALNRSTPSLAKARNLQTLLIDFENRHKKQCLSALGFNEDNIVSFLPVTTSQAVALASFLLTADANGFQAAPGGKAFIQHTVYTVKPELNSQRIVESWTRVLSRYDIMRSVFVEVNDDLTPFAQCILSPDHEAAQIKPHFYSAKSDNECKDVIQAAQKAAEEKISLYEPPRRLSVVQSPTQTIIVFSQLHSVFDGGSETLLLEDIEREYFGQPSIERTGVLTAVERHFSENRAEAAQFWQAYMDGFLSPSFPCLRSTVPGPDENVCGGYSFMSDLSLESLTRQAAALQCSPLSILQAAWAQILFTYTGERDVAFGNTMSDRFTTELANCSAPVLTIQSTRVNLNEENDKRNIDILLERTAQNTAALSYLHTPITGARYDTTIALQMYLNSGKGEALYERVCHPGMHNDLAVMIEVYPDRSGLLEFRLTYQTALLDDDAAYTMLANLARVTNHIMSYPNAKYMDPSVWTSLQGPGQLEQINGYHHLGQQLLHECVAEFAQKSPNAIALAFYDDLSVDHPKVQLTYADLEVKATRVAGFLMSQLPAKEGSKHVVPIFMEKCPELYITLLGILKAGAAWCPVDPSYPPARQIFLIEKTTAGICFTSKSTTSQLSSILPASFKSISVSDLLEGGSCSTSRTLKASESARLDNLSIQRSDIAYVIFTSGTTGTPKGVPISHESASLSIDSYIQRVNVDLDLRGCEVRFLQFANYTFDAFVCDVFTAWRLGGTLVSATRDILLGSFIALANKVGATHTSMTPTFASTLQPQDFETLRVATMGGEVLPQILADKWKSRMSLCNVYGPAETAINTTINRLSAASRSGNIGTALPAVNAYVMASGYPVMKHMLGELVISGPQLSPGYWDNVHSSNNRFRWNSTLQCRVYHTGDYVRQLADGSFDFVGRKDDLVKIRGMRVELTEISTVCSAGHESVVHSEVLLAKLPGSTQSSLICFVDCGLQKSSDVDNFCILKNEEAQLVAQAVKRHATAELPRHMVPDVFMPLNCLPRNQSSKVNRKRLLEVVGREWSMQPMSPVADEQVDPAWCIKHRPLLEKIQGVIKIMPTTLSRSTTLSELGVDSIGAIRLSSRLKNDGHDISAIQVLDSVTIEDLINHLSVKRQGTSNWKTLLSRYLDHWKPLVSRHLARDPAHFSLVPTTVFQDGMLVETLRDPMLYWASYSWRLPSTVDIARVRQAWQHVSKNHDILKVSFVPTAYFEQEETQSSGPSSMFIQLIDYNASMDWQEIVSDSGDWQQSIHALCANLQRTQHENNFSSPPWRVTILAQQDQRIMNLTIHHSLCDGEMLRSLMHDVAWAYSTAELPVKRCQVQEAVSRLAVRYSEPEGHKFWGDMLSPLVSQTSLGDATSNSPKAVVRKIRHRTTELQATRSTSKLTGLARRLGASSLSPLFRVTFGIMLTEYYEQQSVLFGEVRSERLLESQLVGAMAPLSATYPVPFRSSGNLKDMVHSQQILVMDSIRYGPPQPSDVRKILKKSRDEALYSAVYVLRQRSEDDGGSLAPWEEFKDIFEIFVDHEFALNVLEGADDTVTISLSVDETLMSSSAQAIFLQQLDALLIAFDKSAPEISLSGLNAHFPLDLLSIASSKVSAQYTSTVPPSHYIETWAKTHPEWKAVEVATGFLGSQEIVTEDWTYKKLNETANQVANLIIYASLHGRAIAVSLDRSLIAFAIIVGIMKSGNTYVPIEAGLPNDRKSFLLRDSRAAMAFVCDNKLDGVELPPETKVLDTKNKSFIENLSTQDTSDILNNYPENLDAYLLYTSGSTGAPKGVRVSRHNLSSFSDAWGKLIGNVAPKSLELGGVGKFLCLASRAFDVHIGEMFLAWRFGLCAVTGERLSMLDDLPRTFRELGVTHAGIVPSLLDQTGLVPEDAPHLVYLGVGGEKMTPRTQQIWSSSDRVALVNVYGPTEVTIGCSAGRILPDSDTRCIGHPLGDSVAHVLAPGSNEHVKKGMAGELVIEGSLVANGYLNRPDAKGFCDINGRKMYRTGDIVRMDADSSILFLGRKDEQVKVRGQRLELGEVSEVIRSLSPTDIDVVTLLLNHPGTSKQFLVSFVASSGAAVRGELRWINENYKEINNSLRQACEQTLPAYMVPDFIIPISFIPLRDTSAKTDAKALEHMFHTLSLGELFGESSSLVNKPTTAPSRDLTSIEKQILTVVKSVVGQDDKRDARPGSTLFQLGLDSIASVKLSFKLKKLGFSTTVARLLQNPTIEELGRMKNALKESHDAEPSNSESITTRFEELEKKTMNSLKDRETTHIESIRPCMPLQEVLVAHTMSHGSEADNAYVSHMIFELDPAVVVEHVKAAWAAVVKNTELLRTCFIDRENDIVQLVIKENHATPVWKHLSNGTNMLKEELLSCKKEIADDIVTNIDKSPPVRFTLASCDGADETNEMSLFMLSIHHALYDMVSIEMIFQDFEVAYTDSSLPRRPSTLPLLEHIAAQQQNESKAKSYWTTLFDGYDHGIEKISPRTAQTTARTLNASLTTLESLCSQTNMTLSALIQGVFAYVLARTLKRPDLIFGVVLSGRSIDVEGIDAMAAPCISTIPQRLNIGTDGETIAELITTVQDRLFKSMEYQYTSLRSLSRWLEISGPLFSSLFSFTKLSPPEDSGSSKSRILKPTEGEMFLDFELALECEADPGTDTVTLRTRSTMFDKMEELDALLEQMESLVTSFTRGENKAVDGDFGSMLHTRLLPPHGSLQEESDDWSVLEQQIRDVVVAFSGALPNEVKRTTPFIKYGIDSITTIRFSTLLRKNGFWVSGADVLRNPSVAKLATHIQTTSSFNGTAKDSDNEASEPAGIGNWSKALLAGAVSTKVLDDVVAVYPLTPLQAGMISATVMMDPTLYAHHHPFRLPQGTSIDQVRSAWSRLVAKHDILRTSFHEINQPRPQLVGAVHQESILNWHEVATEDVQVAIDDLIKRTQFPSVSSFETPPVKATVIRSPEDMLLVVSLHHATYDGTSIRFIFEDLWAILRGNRVPERNPFYETAMKIHNMSSGSVGFWADSLSGYGGAAAIAEAEDIQNKMTSKTMLLAQDTSALEQWCTEKGVTIQTICQLAVSKAVCAQTKSRDVVLGQVHAARLDINGADKVAGPMLNTVPLRLCIYDDSFTNHDYLRDLQAFQNKSLDHLHASLSDIQRLWRKENGRDGQLFEVLFIFRKGEDATEAPFWQPFEPEGSKESLPPSHYDLVIEVHQKSRGGLELEVHSRFADDTTSNLMSLLVESFESIRKHPDELAISSPGVLSKVPKPGLTRETGAVPTSPFDQSAIDQFLDPLRKVLSETTDTPVSSIDAQTSIFSIGVDSIVAIRVAGACRKAHIPLHTMEIMRNAKIGKLCEVAFAKSGQAAPNRSTTESNGVAPLLDQEVKKAAASKLGRAEAEIQEILPVLPGQEYHLACWLTSGKTLLEPVWVFKAENGLDAGRLRDTWISLVQKNDSLRTCFAQVKPTLAVQAILKPDCVDAAKSFTVQQVPENMTMEEYVKSEIHHLSLSPSSLYEPPVRIVLIQGGREGVSVLLRLHHALYDAWSMGILIDELSSLYCGTMQKPCPPLSVSHFAQFTQQKLRGKNEEQFWTETLGQCDPTILTPKADINTDSKSCNRAFVSFECVDVSMGALKSAARAFGITPQCLIQVAFGRMLSDVTESSSPVFGYYTAGRSADLEGIEALASPTLNMLPVAVPKDLVASQLAGTSLSILLQSFQDRTNSQSDYEQSRLRDVIKWAPNKGVSPLFNAHLNILWNDEILLKPQVSKDTLLRPWPLGVPSDYASPTPLSRGSSVDGLDTSFLPTNVLFADVGPSRETANLAIGIGCDPTLRDAQGLEEIARMFSGHLSRLVGSRDLV.

The adenylation 1 stretch occupies residues A238–K656. Residues S779–L856 enclose the Carrier 1 domain. S816 is subject to O-(pantetheine 4'-phosphoryl)serine. A condensation 1 region spans residues A924–F1175. The interval E1349–R1760 is adenylation 2. Residues P1889–R1965 enclose the Carrier 2 domain. Residue S1926 is modified to O-(pantetheine 4'-phosphoryl)serine. The tract at residues P2001–V2285 is condensation 2. The adenylation 3 stretch occupies residues T2464–R2869. One can recognise a Carrier 3 domain in the interval R3002–K3079. S3040 carries the post-translational modification O-(pantetheine 4'-phosphoryl)serine. A condensation 3 region spans residues C3121–T3530. In terms of domain architecture, Carrier 4 spans S3564–S3637. Position 3598 is an O-(pantetheine 4'-phosphoryl)serine (S3598). The segment at V3679 to E4087 is condensation 4. The Carrier 5 domain occupies S4119–S4195. Residue S4156 is modified to O-(pantetheine 4'-phosphoryl)serine. The segment at W4262–N4589 is condensation 5.

This sequence belongs to the NRP synthetase family.

It participates in siderophore biosynthesis. Its function is as follows. Nonribosomal peptide synthetase required for the biosynthetis of epichloenin A, an extracellular siderophore that plays a crucial role in endophyte-grass symbioses. SidN assembles epichloenin A by activating and incorporating three trans-anhydromevalonylhydroxyornithine (trans-AMHO), 1 glutamine and 4 glycine moieties. Trans-AMHO is produced from L-ornithine via 2 steps involving a L-ornithine N(5)-monooxygenase and an AHMO-N(5)-transacylase that have still to be identified. The third adenylation domain (A3) of sidN incorporates the hydroxamate groups of the siderophore which forms an octahedral iron complex. The other component amino acids are assembled by sidN adenylation domains A1 and A2. This chain is Nonribosomal peptide synthetase sidN, found in Epichloe festucae (strain Fl1).